The primary structure comprises 1875 residues: Neuron navigator 1 (1875 aa).

Position 1 is an N-acetylmethionine (Met1). Residues 1-63 (MLGSSVKSVQ…GGSGSMAKAS (63 aa)) form a disordered region. Ser93 and Ser145 each carry phosphoserine. 2 disordered regions span residues 115 to 230 (SDDM…EERA) and 280 to 339 (SSLR…VGGS). Position 162 is a phosphothreonine (Thr162). Ser197 and Ser202 each carry phosphoserine. Positions 258–283 (ESQRKRTVQNVLDLRQNLEETMSSLR) form a coiled coil. Positions 280–291 (SSLRGSQVTHSS) are enriched in polar residues. Ser299, Ser311, Ser315, Ser365, and Ser394 each carry phosphoserine. Positions 304 to 318 (PRSVSSLSNRSSPLS) are enriched in low complexity. Disordered stretches follow at residues 391–463 (GYMS…RTDS) and 477–783 (SESE…AELP). Composition is skewed to low complexity over residues 414–428 (DESSSISSGLSDASD) and 436–456 (NASSSLNSLPTTPTASRRSST). Ser455, Ser477, Ser479, and Ser493 each carry phosphoserine. Positions 479–489 (SEEKTPKKLEY) are enriched in basic and acidic residues. Over residues 506 to 522 (ERPESCDDASKGGELKK) the composition is skewed to basic and acidic residues. Ser531 bears the Phosphoserine mark. Thr537 carries the phosphothreonine modification. The residue at position 544 (Ser544) is a Phosphoserine. Thr547 is subject to Phosphothreonine. Residues 558–569 (GKPEGKATDKGK) show a composition bias toward basic and acidic residues. The residue at position 575 (Thr575) is a Phosphothreonine. A compositionally biased stretch (basic and acidic residues) spans 584–594 (AGRDRLSDAKK). 2 stretches are compositionally biased toward polar residues: residues 618–638 (GTATVMQTGSSATLSKIQKSS) and 648–658 (RKTSLDVSNSV). At Ser651 the chain carries Phosphoserine. The residue at position 690 (Arg690) is an Omega-N-methylarginine. 2 stretches are compositionally biased toward polar residues: residues 696–712 (VSSSIDPSLLSTKQGGL) and 726–735 (GRSTPAPVNQ). A coiled-coil region spans residues 733-758 (VNQTDREKEKAKAKAVALDSDNISLK). Phosphoserine occurs at positions 752, 756, 762, 799, and 810. The span at 753-772 (DNISLKSIGSPESTPKNQAS) shows a compositional bias: polar residues. Disordered regions lie at residues 800–840 (LANL…PLPS) and 893–982 (MSLP…SPPA). Low complexity-rich tracts occupy residues 807–818 (NSNSLDLPSSSD) and 893–902 (MSLPSAFPSS). Ser998 carries the phosphoserine modification. Thr1004 carries the post-translational modification Phosphothreonine. Residues 1070–1161 (SSAEERMQSE…SEAQAVIQGA (92 aa)) adopt a coiled-coil conformation. Position 1168 is a phosphothreonine (Thr1168). Disordered regions lie at residues 1172-1202 (LRIKRQNSSDSISSLNSITSHSSIGSSKDAD), 1242-1306 (ATPD…KEVS), 1359-1381 (VAPGPSSGCTPGQVPGSSALSSP), and 1808-1841 (KLYHLPPPSVGPHSTASPPEDRTVKDSTPNSLDS). Ser1179 bears the Phosphoserine mark. Residues 1179–1198 (SSDSISSLNSITSHSSIGSS) are compositionally biased toward low complexity. Polar residues predominate over residues 1244–1259 (PDSSAPSSPKLQHGST). Residues 1260-1281 (ETASPSIKSSTSSSVGTEVTET) show a composition bias toward low complexity. A Phosphoserine modification is found at Ser1263. The stretch at 1301–1360 (EKKEVSELRSELWEKEMKLTDIRLEALNSAHQLDQLRETMHNMQLEVDLLKAENDRLKVA) forms a coiled coil. Positions 1365–1381 (SGCTPGQVPGSSALSSP) are enriched in polar residues. At Ser1380 the chain carries Phosphoserine.

It belongs to the Nav/unc-53 family. Interacts with tubulin. Expressed in heart and brain. Present in brain (at protein level). In adult brain, found almost exclusively in areas of secondary neurogenesis from the hippocampus and the subventricular zone.

The protein resides in the cytoplasm. Its subcellular location is the cytoskeleton. May be involved in neuronal migration. This Mus musculus (Mouse) protein is Neuron navigator 1 (Nav1).